The primary structure comprises 412 residues: N-carbamoyl-L-amino-acid amidohydrolase (412 aa).

The a divalent metal cation site is built by histidine 82, aspartate 93, glutamate 128, and histidine 193. An N-carbamoyl-L-alpha-amino acid contacts are provided by glutamine 196, histidine 229, asparagine 278, arginine 291, and glycine 360. Residues serine 212–proline 330 are involved in dimerization. Histidine 385 provides a ligand contact to a divalent metal cation.

Belongs to the peptidase M20 family. Homodimer. The cofactor is Mn(2+). Ni(2+) serves as cofactor. It depends on Co(2+) as a cofactor. Requires Fe(2+) as cofactor.

It carries out the reaction an N-carbamoyl-L-alpha-amino acid + H2O + 2 H(+) = an L-alpha-amino acid + NH4(+) + CO2. The catalysed reaction is N-carbamoyl-L-tryptophan + H2O + 2 H(+) = L-tryptophan + NH4(+) + CO2. The enzyme catalyses N-carbamoyl-L-tyrosine + H2O + 2 H(+) = L-tyrosine + NH4(+) + CO2. It catalyses the reaction N-carbamoyl-L-phenylalanine + H2O + 2 H(+) = L-phenylalanine + NH4(+) + CO2. Its function is as follows. Catalyzes the hydrolysis of aliphatic N-carbamoyl-L-alpha-amino acids to free L-alpha-amino acids. Is strictly L-specific since it is inactive toward N-carbamoyl-D-alpha-amino acids. Shows a preference for aromatic N-carbamoyl-L-alpha-amino acids, such as N-carbamoyl-L-tryptophan and N-carbamoyl-L-tyrosine and, to a lesser extent, N-carbamoyl-L-phenylalanine and the non-natural amino acid N-carbamoyl-L-thienylalanine. Carbamoyl derivatives of beta-alanine and charged aliphatic amino acids are not accepted as substrates. This is N-carbamoyl-L-amino-acid amidohydrolase from Paenarthrobacter aurescens (Arthrobacter aurescens).